The chain runs to 826 residues: DEAD-box ATP-dependent RNA helicase 13 (826 aa).

A compositionally biased stretch (basic and acidic residues) spans 1–10 (MVTGDKESSL). Disordered stretches follow at residues 1-62 (MVTG…QLDG) and 76-175 (HLTL…GDDT). The span at 11–22 (MKKRNKRSHKRK) shows a compositional bias: basic residues. Residues 49 to 58 (SFSTLFSGSG) show a composition bias toward polar residues. Over residues 94-128 (EDDDDTNETVDEMIEGEEAEEDGEGRDDEDDEDDE) the composition is skewed to acidic residues. Positions 125-166 (EDDEETRKKKEKKAKRNKEKKKEKKKKKQKKINEAAKNQDAS) form a coiled coil. Basic residues predominate over residues 133–154 (KKEKKAKRNKEKKKEKKKKKQK). A Q motif motif is present at residues 190-218 (SAWSSMRLHPLLMKSIYRLDFKEPTKIQK). In terms of domain architecture, Helicase ATP-binding spans 222-439 (NVAAYQGKDV…KLKRGSSKSK (218 aa)). ATP is bound at residue 235-242 (AETGSGKT). Positions 363 to 366 (DEAD) match the DEAD box motif. In terms of domain architecture, Helicase C-terminal spans 476–644 (KIEESFIKCE…YMPAVRKRLY (169 aa)). 2 coiled-coil regions span residues 666 to 712 (LKKH…TLLS) and 783 to 810 (KMKG…IGRR). The disordered stretch occupies residues 783–826 (KMKGQSAEKRRDIASLKKKRKEEKIGRRDQRRNQKKQRKLMASS). Basic and acidic residues-rich tracts occupy residues 788 to 797 (SAEKRRDIAS) and 804 to 814 (EEKIGRRDQRR). Positions 815 to 826 (NQKKQRKLMASS) are enriched in basic residues.

Belongs to the DEAD box helicase family. DDX24/MAK5 subfamily.

It catalyses the reaction ATP + H2O = ADP + phosphate + H(+). This is DEAD-box ATP-dependent RNA helicase 13 (RH13) from Arabidopsis thaliana (Mouse-ear cress).